A 231-amino-acid chain; its full sequence is Ribose-5-phosphate isomerase A (231 aa).

Substrate-binding positions include 28–31 (TGST), 83–86 (DGAD), and 96–99 (KGGG). Glutamate 105 (proton acceptor) is an active-site residue. Substrate is bound at residue lysine 123.

This sequence belongs to the ribose 5-phosphate isomerase family. In terms of assembly, homodimer.

The catalysed reaction is aldehydo-D-ribose 5-phosphate = D-ribulose 5-phosphate. It participates in carbohydrate degradation; pentose phosphate pathway; D-ribose 5-phosphate from D-ribulose 5-phosphate (non-oxidative stage): step 1/1. Catalyzes the reversible conversion of ribose-5-phosphate to ribulose 5-phosphate. The chain is Ribose-5-phosphate isomerase A from Rhizobium meliloti (strain 1021) (Ensifer meliloti).